A 128-amino-acid chain; its full sequence is Sulfurtransferase TusD (128 aa).

The Cysteine persulfide intermediate role is filled by cysteine 78.

Belongs to the DsrE/TusD family. Heterohexamer, formed by a dimer of trimers. The hexameric TusBCD complex contains 2 copies each of TusB, TusC and TusD. The TusBCD complex interacts with TusE.

The protein resides in the cytoplasm. Part of a sulfur-relay system required for 2-thiolation of 5-methylaminomethyl-2-thiouridine (mnm(5)s(2)U) at tRNA wobble positions. Accepts sulfur from TusA and transfers it in turn to TusE. The polypeptide is Sulfurtransferase TusD (Escherichia coli O157:H7).